The following is a 221-amino-acid chain: GTP-binding nuclear protein Ran/TC4 (221 aa).

The Small GTPase Ran-type domain occupies 10–174; it reads DYPSFKLVIV…LYLARKLAGD (165 aa). Position 21–28 (21–28) interacts with GTP; it reads DGGTGKTT. A switch-I region spans residues 40–48; it reads KKYEPTIGV. Residues glycine 71, 125–128, and 153–155 contribute to the GTP site; these read NKVD and SAK. The switch-II stretch occupies residues 71-87; the sequence is GQEKFGGLRDGYYIHGQ.

Belongs to the small GTPase superfamily. Ran family. Found in a nuclear export complex with RanGTP, exportin and pre-miRNA.

It localises to the nucleus. GTP-binding protein involved in nucleocytoplasmic transport. Required for the import of protein into the nucleus and also for RNA export. Involved in chromatin condensation and control of cell cycle. The protein is GTP-binding nuclear protein Ran/TC4 of Vicia faba (Broad bean).